The chain runs to 719 residues: Polyphosphate kinase (719 aa).

An ATP-binding site is contributed by asparagine 47. 2 residues coordinate Mg(2+): arginine 377 and arginine 407. The active-site Phosphohistidine intermediate is histidine 437. Residues tyrosine 470, arginine 566, and histidine 594 each coordinate ATP.

This sequence belongs to the polyphosphate kinase 1 (PPK1) family. Requires Mg(2+) as cofactor. An intermediate of this reaction is the autophosphorylated ppk in which a phosphate is covalently linked to a histidine residue through a N-P bond.

The enzyme catalyses [phosphate](n) + ATP = [phosphate](n+1) + ADP. In terms of biological role, catalyzes the reversible transfer of the terminal phosphate of ATP to form a long-chain polyphosphate (polyP). This chain is Polyphosphate kinase, found in Exiguobacterium sibiricum (strain DSM 17290 / CCUG 55495 / CIP 109462 / JCM 13490 / 255-15).